The following is a 470-amino-acid chain: Dihydrolipoyl dehydrogenase (470 aa).

FAD is bound by residues 39–47 (EKGNLGGVC), Lys-56, and Ala-119. Cys-47 and Cys-52 are oxidised to a cystine. NAD(+) is bound by residues 183 to 187 (GGGYI), Glu-206, and 271 to 274 (TVGR). Positions 314 and 322 each coordinate FAD. The active-site Proton acceptor is the His-446.

It belongs to the class-I pyridine nucleotide-disulfide oxidoreductase family. In terms of assembly, homodimer. Identified in a complex with PdhC. FAD serves as cofactor.

It is found in the cytoplasm. It carries out the reaction N(6)-[(R)-dihydrolipoyl]-L-lysyl-[protein] + NAD(+) = N(6)-[(R)-lipoyl]-L-lysyl-[protein] + NADH + H(+). Its function is as follows. Lipoamide dehydrogenase is a component of the alpha-ketoacid dehydrogenase complexes. This Geobacillus stearothermophilus (Bacillus stearothermophilus) protein is Dihydrolipoyl dehydrogenase (pdhD).